The chain runs to 837 residues: Striatin-interacting protein 1 (837 aa).

Residue Met-1 is modified to N-acetylmethionine. The disordered stretch occupies residues 1–67; that stretch reads MEPAAGTPGP…DSEGYSESPD (67 aa). Residues 18–35 are compositionally biased toward pro residues; it reads PQPPPPPPPATAQPPPGA. Positions 47–60 are enriched in basic and acidic residues; sequence KAREFNRNQRKDSE. Residues Ser-59, Ser-335, and Ser-339 each carry the phosphoserine modification. Residues 336 to 423 form a disordered region; that stretch reads PPASASDLIE…DRLTCPKGLP (88 aa). The segment covering 356–377 has biased composition (basic and acidic residues); the sequence is KALIKQDNLDAFNERDPYKADD. A compositionally biased stretch (acidic residues) spans 378–391; it reads SREEEEENDDDNSL. Ser-788 is subject to Phosphoserine. A required for STRIPAK core complex formation region spans residues 796-837; it reads DNCLQSVLGQRVDLPEDFQMNYDLWLEREVFSKPISWEELLQ.

This sequence belongs to the STRIP family. In terms of assembly, part of the core of STRIPAK complexes composed of PP2A catalytic and scaffolding subunits, the striatins (PP2A regulatory subunits), the striatin-associated proteins MOB4, STRIP1 and STRIP2, PDCD10 and members of the STE20 kinases, such as STK24 and STK26. The STRIPAK complex can be extended by adapter proteins such as SLMAP:SIKE1, CTTNBP2 or CTTNBP2NL. Interacts with CDC42BPB. Interacts with CTTNBP2NL.

It localises to the cytoplasm. In terms of biological role, plays a role in the regulation of cell morphology and cytoskeletal organization. Required in the cortical actin filament dynamics and cell shape. Part of the striatin-interacting phosphatase and kinase (STRIPAK) complexes. STRIPAK complexes have critical roles in protein (de)phosphorylation and are regulators of multiple signaling pathways including Hippo, MAPK, nuclear receptor and cytoskeleton remodeling. Different types of STRIPAK complexes are involved in a variety of biological processes such as cell growth, differentiation, apoptosis, metabolism and immune regulation. This is Striatin-interacting protein 1 (STRIP1) from Bos taurus (Bovine).